Here is a 311-residue protein sequence, read N- to C-terminus: Probable manganese-dependent inorganic pyrophosphatase (311 aa).

6 residues coordinate Mn(2+): His-9, Asp-13, Asp-15, Asp-75, His-97, and Asp-149.

Belongs to the PPase class C family. Requires Mn(2+) as cofactor.

The protein resides in the cytoplasm. The enzyme catalyses diphosphate + H2O = 2 phosphate + H(+). This is Probable manganese-dependent inorganic pyrophosphatase from Lactobacillus helveticus (strain DPC 4571).